The sequence spans 282 residues: Pantothenate synthetase (282 aa).

30–37 (MGYLHEGH) provides a ligand contact to ATP. The active-site Proton donor is the H37. Q61 contributes to the (R)-pantoate binding site. Residue Q61 participates in beta-alanine binding. Residue 147 to 150 (GMKD) coordinates ATP. Q153 is a binding site for (R)-pantoate. Residues V176 and 184–187 (KSSR) contribute to the ATP site.

The protein belongs to the pantothenate synthetase family. Homodimer.

It is found in the cytoplasm. It carries out the reaction (R)-pantoate + beta-alanine + ATP = (R)-pantothenate + AMP + diphosphate + H(+). Its pathway is cofactor biosynthesis; (R)-pantothenate biosynthesis; (R)-pantothenate from (R)-pantoate and beta-alanine: step 1/1. Catalyzes the condensation of pantoate with beta-alanine in an ATP-dependent reaction via a pantoyl-adenylate intermediate. The polypeptide is Pantothenate synthetase (Bacillus cereus (strain ZK / E33L)).